Here is a 606-residue protein sequence, read N- to C-terminus: Putative helicase 172L (606 aa).

One can recognise a Helicase ATP-binding domain in the interval G59 to K264. L72–T79 lines the ATP pocket. The Helicase C-terminal domain maps to Y437–I586.

It belongs to the SNF2/RAD54 helicase family.

This chain is Putative helicase 172L, found in Invertebrate iridescent virus 6 (IIV-6).